The primary structure comprises 470 residues: uncharacterized protein (470 aa).

The segment at 439–470 is disordered; the sequence is SIKSSKSKKQLKSSKSKKPIKHTKTKNIYVET. Over residues 443–463 the composition is skewed to basic residues; that stretch reads SKSKKQLKSSKSKKPIKHTKT.

This is an uncharacterized protein from Acanthamoeba polyphaga mimivirus (APMV).